The chain runs to 277 residues: Glutamate racemase (277 aa).

Residues 16–17 and 48–49 each bind substrate; these read DS and YG. Residue cysteine 79 is the Proton donor/acceptor of the active site. A substrate-binding site is contributed by 80–81; it reads NT. Cysteine 191 acts as the Proton donor/acceptor in catalysis. 192–193 lines the substrate pocket; it reads TH.

Belongs to the aspartate/glutamate racemases family.

It catalyses the reaction L-glutamate = D-glutamate. Its pathway is cell wall biogenesis; peptidoglycan biosynthesis. Functionally, provides the (R)-glutamate required for cell wall biosynthesis. The sequence is that of Glutamate racemase from Symbiobacterium thermophilum (strain DSM 24528 / JCM 14929 / IAM 14863 / T).